We begin with the raw amino-acid sequence, 87 residues long: MNKKNDINRKIFCNFFKKYEEGLTYIPYPGLLGHKIYNEISKLAWNKWILQQTIIINEKKMNMLNKNDQKKIENYMIKFLFKNKQQL.

It belongs to the Fe(2+)-trafficking protein family. As to quaternary structure, monomer.

Its function is as follows. Could be a mediator in iron transactions between iron acquisition and iron-requiring processes, such as synthesis and/or repair of Fe-S clusters in biosynthetic enzymes. In Buchnera aphidicola subsp. Baizongia pistaciae (strain Bp), this protein is Probable Fe(2+)-trafficking protein.